A 308-amino-acid chain; its full sequence is Acetyl-coenzyme A carboxylase carboxyl transferase subunit alpha (308 aa).

The 251-residue stretch at 36-286 folds into the CoA carboxyltransferase C-terminal domain; it reads ELEKEVSSVY…ESYFLKAFEE (251 aa).

This sequence belongs to the AccA family. In terms of assembly, acetyl-CoA carboxylase is a heterohexamer composed of biotin carboxyl carrier protein (AccB), biotin carboxylase (AccC) and two subunits each of ACCase subunit alpha (AccA) and ACCase subunit beta (AccD).

It is found in the cytoplasm. The enzyme catalyses N(6)-carboxybiotinyl-L-lysyl-[protein] + acetyl-CoA = N(6)-biotinyl-L-lysyl-[protein] + malonyl-CoA. Its pathway is lipid metabolism; malonyl-CoA biosynthesis; malonyl-CoA from acetyl-CoA: step 1/1. Its function is as follows. Component of the acetyl coenzyme A carboxylase (ACC) complex. First, biotin carboxylase catalyzes the carboxylation of biotin on its carrier protein (BCCP) and then the CO(2) group is transferred by the carboxyltransferase to acetyl-CoA to form malonyl-CoA. The chain is Acetyl-coenzyme A carboxylase carboxyl transferase subunit alpha from Helicobacter hepaticus (strain ATCC 51449 / 3B1).